Consider the following 427-residue polypeptide: Glutamate-1-semialdehyde 2,1-aminomutase (427 aa).

K265 is subject to N6-(pyridoxal phosphate)lysine.

Belongs to the class-III pyridoxal-phosphate-dependent aminotransferase family. HemL subfamily. As to quaternary structure, homodimer. Pyridoxal 5'-phosphate serves as cofactor.

It localises to the cytoplasm. It carries out the reaction (S)-4-amino-5-oxopentanoate = 5-aminolevulinate. Its pathway is porphyrin-containing compound metabolism; protoporphyrin-IX biosynthesis; 5-aminolevulinate from L-glutamyl-tRNA(Glu): step 2/2. The polypeptide is Glutamate-1-semialdehyde 2,1-aminomutase (Edwardsiella ictaluri (strain 93-146)).